The sequence spans 261 residues: RING finger and CHY zinc finger domain-containing protein 1 (261 aa).

The CHY-type zinc finger occupies 13 to 80 (QERGQRGCEH…AQQTCEECST (68 aa)). 24 residues coordinate Zn(2+): Cys-20, His-22, Cys-33, Cys-34, Cys-40, Cys-43, His-44, His-50, Cys-62, Cys-65, Cys-75, Cys-78, Cys-87, Cys-90, His-101, Cys-102, Cys-105, Cys-108, His-118, Cys-119, Cys-122, Cys-125, His-134, and Cys-136. The CTCHY-type zinc-finger motif lies at 82–144 (FGEYYCDICH…KCIENVSRQN (63 aa)). An RING-type zinc finger spans residues 145–189 (CPICLEDIHTSRVVAHVLPCGHLLHRTCYEEMLKEGYRCPLCMHS). Ser-257 is subject to Phosphoserine.

As to quaternary structure, monomer and homodimer. Interacts with AR, MDM2, KAT5, PLAG1, PLAGL2, COPE, UBE2D2 and GORAB/NTKLBP1. Subject to ubiquitination and proteasomal degradation. Interaction with PLAGL2 or KAT5 enhances protein stability.

The protein localises to the nucleus. The protein resides in the nucleus speckle. It localises to the cytoplasm. The enzyme catalyses S-ubiquitinyl-[E2 ubiquitin-conjugating enzyme]-L-cysteine + [acceptor protein]-L-lysine = [E2 ubiquitin-conjugating enzyme]-L-cysteine + N(6)-ubiquitinyl-[acceptor protein]-L-lysine.. It functions in the pathway protein modification; protein ubiquitination. Its function is as follows. E3 ubiquitin-protein ligase that mediates ubiquitination of target proteins, including p53/TP53, TP73, HDAC1 and CDKN1B. Mediates ubiquitination and degradation of p53/TP53; preferentially acts on tetrameric p53/TP53. Catalyzes monoubiquitinates the translesion DNA polymerase POLH. Involved in the ribosome-associated quality control (RQC) pathway, which mediates the extraction of incompletely synthesized nascent chains from stalled ribosomes: RCHY1 acts downstream of NEMF and recognizes CAT tails associated with stalled nascent chains, leading to their ubiquitination and degradation. Has no E3 ubiquitin-protein ligase activity. This Homo sapiens (Human) protein is RING finger and CHY zinc finger domain-containing protein 1 (RCHY1).